The sequence spans 419 residues: Tyrosine--tRNA ligase (419 aa).

Y34 contacts L-tyrosine. A 'HIGH' region motif is present at residues 39 to 48 (PTADSLHLGN). Positions 169 and 173 each coordinate L-tyrosine. Positions 229 to 233 (KFGKS) match the 'KMSKS' region motif. K232 lines the ATP pocket. Residues 353 to 419 (LTLIELLISA…GKKKNFVLTY (67 aa)) form the S4 RNA-binding domain.

This sequence belongs to the class-I aminoacyl-tRNA synthetase family. TyrS type 1 subfamily. In terms of assembly, homodimer.

Its subcellular location is the cytoplasm. The catalysed reaction is tRNA(Tyr) + L-tyrosine + ATP = L-tyrosyl-tRNA(Tyr) + AMP + diphosphate + H(+). Catalyzes the attachment of tyrosine to tRNA(Tyr) in a two-step reaction: tyrosine is first activated by ATP to form Tyr-AMP and then transferred to the acceptor end of tRNA(Tyr). This chain is Tyrosine--tRNA ligase, found in Lactococcus lactis subsp. cremoris (strain SK11).